We begin with the raw amino-acid sequence, 62 residues long: Sperm protamine P1 (62 aa).

The tract at residues 1–62 is disordered; sequence MARYRRHSRS…RYSRRGRRRY (62 aa).

The protein belongs to the protamine P1 family. In terms of tissue distribution, testis.

It localises to the nucleus. The protein localises to the chromosome. Functionally, protamines substitute for histones in the chromatin of sperm during the haploid phase of spermatogenesis. They compact sperm DNA into a highly condensed, stable and inactive complex. In Neophascogale lorentzii (Long-clawed marsupial mouse), this protein is Sperm protamine P1 (PRM1).